We begin with the raw amino-acid sequence, 458 residues long: UDP-N-acetylmuramoylalanine--D-glutamate ligase (458 aa).

124–130 (GSDGKTT) provides a ligand contact to ATP.

The protein belongs to the MurCDEF family.

The protein localises to the cytoplasm. It carries out the reaction UDP-N-acetyl-alpha-D-muramoyl-L-alanine + D-glutamate + ATP = UDP-N-acetyl-alpha-D-muramoyl-L-alanyl-D-glutamate + ADP + phosphate + H(+). It participates in cell wall biogenesis; peptidoglycan biosynthesis. In terms of biological role, cell wall formation. Catalyzes the addition of glutamate to the nucleotide precursor UDP-N-acetylmuramoyl-L-alanine (UMA). In Clostridium botulinum (strain Loch Maree / Type A3), this protein is UDP-N-acetylmuramoylalanine--D-glutamate ligase.